The sequence spans 180 residues: Transmembrane protein 190 (180 aa).

An N-terminal signal peptide occupies residues 1–21 (MVGSGIPALGLLLLMQGSADG). The Extracellular portion of the chain corresponds to 22-81 (NGIQGFFYPWSCEGDVWDRESCGGQAAIENPNLCLRLRCCYRDGVCYHQRPDENMRRKHM). The P-type domain occupies 31-71 (WSCEGDVWDRESCGGQAAIENPNLCLRLRCCYRDGVCYHQR). Cystine bridges form between Cys-33–Cys-61, Cys-43–Cys-60, and Cys-55–Cys-67. A helical transmembrane segment spans residues 82 to 102 (WALGWTCGGLLFLITSICLFW). Residues 103–180 (WARRHDMLRL…EETEGGDEDD (78 aa)) lie on the Cytoplasmic side of the membrane. Over residues 131–140 (KDRTPSEKKT) the composition is skewed to basic and acidic residues. The segment at 131 to 180 (KDRTPSEKKTPSVGSIPPAAPTEGALDVSGGTEGEGTEGGEETEGGDEDD) is disordered. The span at 165–180 (EGTEGGEETEGGDEDD) shows a compositional bias: acidic residues.

Its subcellular location is the membrane. In Bos taurus (Bovine), this protein is Transmembrane protein 190 (TMEM190).